The sequence spans 275 residues: Formamidopyrimidine-DNA glycosylase (275 aa).

Catalysis depends on Pro-2, which acts as the Schiff-base intermediate with DNA. Catalysis depends on Glu-3, which acts as the Proton donor. Lys-58 functions as the Proton donor; for beta-elimination activity in the catalytic mechanism. His-95 and Arg-114 together coordinate DNA. Residues 241-275 form an FPG-type zinc finger; that stretch reads TVYGRHNQPCPQCGGLVVKETLGQRGTFYCPNCQK. The active-site Proton donor; for delta-elimination activity is Arg-265.

This sequence belongs to the FPG family. As to quaternary structure, monomer. The cofactor is Zn(2+).

The enzyme catalyses Hydrolysis of DNA containing ring-opened 7-methylguanine residues, releasing 2,6-diamino-4-hydroxy-5-(N-methyl)formamidopyrimidine.. The catalysed reaction is 2'-deoxyribonucleotide-(2'-deoxyribose 5'-phosphate)-2'-deoxyribonucleotide-DNA = a 3'-end 2'-deoxyribonucleotide-(2,3-dehydro-2,3-deoxyribose 5'-phosphate)-DNA + a 5'-end 5'-phospho-2'-deoxyribonucleoside-DNA + H(+). Its function is as follows. Involved in base excision repair of DNA damaged by oxidation or by mutagenic agents. Acts as a DNA glycosylase that recognizes and removes damaged bases. Has a preference for oxidized purines, such as 7,8-dihydro-8-oxoguanine (8-oxoG). Has AP (apurinic/apyrimidinic) lyase activity and introduces nicks in the DNA strand. Cleaves the DNA backbone by beta-delta elimination to generate a single-strand break at the site of the removed base with both 3'- and 5'-phosphates. The protein is Formamidopyrimidine-DNA glycosylase (mutM) of Neisseria meningitidis serogroup A / serotype 4A (strain DSM 15465 / Z2491).